A 355-amino-acid chain; its full sequence is Putative beta-lactamase HcpE (355 aa).

A signal peptide spans 1 to 22; it reads MNIKILKILVGGLFFLSLNAHL. TPR repeat units lie at residues 27-60, 63-96, 98-131, 132-166, 202-240, 245-275, 276-311, and 312-344; these read DNSF…GVSE, TQLG…DDRE, CFGL…LKHP, ESCY…DMAK, GQAC…NNSG, LGSM…MGSA, VSCS…MGDE, and VGCF…GMKQ. Cystine bridges form between Cys-54/Cys-62, Cys-90/Cys-98, Cys-126/Cys-134, Cys-160/Cys-168, Cys-197/Cys-205, Cys-234/Cys-242, Cys-270/Cys-278, Cys-306/Cys-314, and Cys-338/Cys-346.

It belongs to the hcp beta-lactamase family.

Its subcellular location is the secreted. The enzyme catalyses a beta-lactam + H2O = a substituted beta-amino acid. May hydrolyze 6-aminopenicillinic acid and 7-aminocephalosporanic acid (ACA) derivatives. The sequence is that of Putative beta-lactamase HcpE (hcpE) from Helicobacter pylori (strain J99 / ATCC 700824) (Campylobacter pylori J99).